Reading from the N-terminus, the 212-residue chain is Leucine efflux protein (212 aa).

Helical transmembrane passes span 12 to 32, 49 to 69, 71 to 91, 122 to 142, 153 to 173, and 188 to 208; these read TYLV…LFVL, GVFI…ATLI, TTPI…LYLG, ILSL…VQFI, FFIL…FLII, and LAKV…ARLA.

The protein belongs to the Rht family.

The protein localises to the cell inner membrane. It carries out the reaction L-leucine(in) + H(+)(out) = L-leucine(out) + H(+)(in). Exporter of leucine. This is Leucine efflux protein (leuE) from Escherichia coli O6:K15:H31 (strain 536 / UPEC).